A 135-amino-acid polypeptide reads, in one-letter code: ATP synthase epsilon chain, chloroplastic (135 aa).

This sequence belongs to the ATPase epsilon chain family. As to quaternary structure, F-type ATPases have 2 components, CF(1) - the catalytic core - and CF(0) - the membrane proton channel. CF(1) has five subunits: alpha(3), beta(3), gamma(1), delta(1), epsilon(1). CF(0) has three main subunits: a, b and c.

It localises to the plastid. The protein localises to the chloroplast thylakoid membrane. In terms of biological role, produces ATP from ADP in the presence of a proton gradient across the membrane. In Euglena gracilis, this protein is ATP synthase epsilon chain, chloroplastic.